The following is a 347-amino-acid chain: NADH-ubiquinone oxidoreductase chain 2 (347 aa).

A run of 11 helical transmembrane segments spans residues 3 to 23 (PLIF…VMMS), 25 to 45 (HWLM…PLLM), 59 to 79 (YFLT…INLL), 96 to 116 (IIMT…FWVP), 122 to 144 (ISLS…VLYV), 149 to 171 (INLD…GGLN), 178 to 198 (ILAY…VFNP), 202 to 222 (LLNL…FMVA), 247 to 267 (IMLS…WMII), 276 to 296 (ITLA…YMRL), and 326 to 346 (LPVL…ITLL).

Belongs to the complex I subunit 2 family. In terms of assembly, core subunit of respiratory chain NADH dehydrogenase (Complex I) which is composed of 45 different subunits. Interacts with TMEM242.

It is found in the mitochondrion inner membrane. It catalyses the reaction a ubiquinone + NADH + 5 H(+)(in) = a ubiquinol + NAD(+) + 4 H(+)(out). In terms of biological role, core subunit of the mitochondrial membrane respiratory chain NADH dehydrogenase (Complex I) which catalyzes electron transfer from NADH through the respiratory chain, using ubiquinone as an electron acceptor. Essential for the catalytic activity and assembly of complex I. This Saccopteryx bilineata (Greater white-lined bat) protein is NADH-ubiquinone oxidoreductase chain 2.